Reading from the N-terminus, the 229-residue chain is ATP synthase subunit a (229 aa).

Helical transmembrane passes span 25 to 45, 86 to 106, 111 to 131, 142 to 162, 181 to 201, and 202 to 222; these read ADAI…SLIA, IATL…PGFF, NLNT…IVGI, FMGP…IGHL, LVLM…MMLM, and GVLV…IYIQ.

The protein belongs to the ATPase A chain family. As to quaternary structure, F-type ATPases have 2 components, CF(1) - the catalytic core - and CF(0) - the membrane proton channel. CF(1) has five subunits: alpha(3), beta(3), gamma(1), delta(1), epsilon(1). CF(0) has three main subunits: a(1), b(2) and c(9-12). The alpha and beta chains form an alternating ring which encloses part of the gamma chain. CF(1) is attached to CF(0) by a central stalk formed by the gamma and epsilon chains, while a peripheral stalk is formed by the delta and b chains.

Its subcellular location is the cell inner membrane. Functionally, key component of the proton channel; it plays a direct role in the translocation of protons across the membrane. The protein is ATP synthase subunit a of Geobacter sulfurreducens (strain ATCC 51573 / DSM 12127 / PCA).